The sequence spans 187 residues: UPF0200 protein APE_1753.1 (187 aa).

13 to 20 (GLPGSGKS) contacts ATP.

It belongs to the UPF0200 family.

This chain is UPF0200 protein APE_1753.1, found in Aeropyrum pernix (strain ATCC 700893 / DSM 11879 / JCM 9820 / NBRC 100138 / K1).